We begin with the raw amino-acid sequence, 244 residues long: NAD(P)H-quinone oxidoreductase subunit K (244 aa).

Residues C51, C52, C116, and C147 each coordinate [4Fe-4S] cluster.

Belongs to the complex I 20 kDa subunit family. As to quaternary structure, NDH-1 can be composed of about 15 different subunits; different subcomplexes with different compositions have been identified which probably have different functions. Requires [4Fe-4S] cluster as cofactor.

It is found in the cellular thylakoid membrane. It carries out the reaction a plastoquinone + NADH + (n+1) H(+)(in) = a plastoquinol + NAD(+) + n H(+)(out). It catalyses the reaction a plastoquinone + NADPH + (n+1) H(+)(in) = a plastoquinol + NADP(+) + n H(+)(out). NDH-1 shuttles electrons from an unknown electron donor, via FMN and iron-sulfur (Fe-S) centers, to quinones in the respiratory and/or the photosynthetic chain. The immediate electron acceptor for the enzyme in this species is believed to be plastoquinone. Couples the redox reaction to proton translocation, and thus conserves the redox energy in a proton gradient. Cyanobacterial NDH-1 also plays a role in inorganic carbon-concentration. The polypeptide is NAD(P)H-quinone oxidoreductase subunit K (Synechococcus sp. (strain JA-3-3Ab) (Cyanobacteria bacterium Yellowstone A-Prime)).